The primary structure comprises 690 residues: Protein AC23 (690 aa).

An N-terminal signal peptide occupies residues 1–37; that stretch reads MLACKFSQYQAFIMDGVKLLGTCALIILLSTTSTVVG.

Its subcellular location is the virion. In terms of biological role, pathogenicity factor that accelerates mortality in the host insect. The chain is Protein AC23 from Autographa californica nuclear polyhedrosis virus (AcMNPV).